The chain runs to 255 residues: Probable iron chelatin transport ATP-binding protein jhp_0821 (255 aa).

In terms of domain architecture, ABC transporter spans 3 to 240 (LEVKNLSFKY…HNLSALYDTP (238 aa)). 35–42 (APNGSGKT) contacts ATP.

It belongs to the ABC transporter superfamily.

The protein resides in the cell inner membrane. Its function is as follows. Part of a binding-protein-dependent transport system for an iron chelatin. Probably responsible for energy coupling to the transport system (Potential). In Helicobacter pylori (strain J99 / ATCC 700824) (Campylobacter pylori J99), this protein is Probable iron chelatin transport ATP-binding protein jhp_0821.